Consider the following 349-residue polypeptide: uncharacterized protein (349 aa).

Residues 17-37 (VIAIVSTGLVFAMTLVLTGLV) traverse the membrane as a helical segment. A disordered region spans residues 111–131 (FGAPEHGPGMPRVSDGRAPST). The next 3 helical transmembrane spans lie at 230–250 (AITV…GSVV), 284–304 (VVAL…APLF), and 308–328 (VVVP…IGLL).

This sequence belongs to the ABC-4 integral membrane protein family.

Its subcellular location is the cell membrane. This is an uncharacterized protein from Mycobacterium bovis (strain ATCC BAA-935 / AF2122/97).